The chain runs to 322 residues: Ferrochelatase (322 aa).

Fe cation-binding residues include histidine 195 and glutamate 276.

Belongs to the ferrochelatase family.

Its subcellular location is the cytoplasm. The catalysed reaction is heme b + 2 H(+) = protoporphyrin IX + Fe(2+). It functions in the pathway porphyrin-containing compound metabolism; protoheme biosynthesis; protoheme from protoporphyrin-IX: step 1/1. In terms of biological role, catalyzes the ferrous insertion into protoporphyrin IX. The protein is Ferrochelatase of Edwardsiella ictaluri (strain 93-146).